Consider the following 322-residue polypeptide: Acetyl-coenzyme A carboxylase carboxyl transferase subunit alpha 2 (322 aa).

The CoA carboxyltransferase C-terminal domain occupies 37–294 (EINRLSARSE…KRVLQESLRN (258 aa)).

This sequence belongs to the AccA family. As to quaternary structure, acetyl-CoA carboxylase is a heterohexamer composed of biotin carboxyl carrier protein (AccB), biotin carboxylase (AccC) and two subunits each of ACCase subunit alpha (AccA) and ACCase subunit beta (AccD).

The protein resides in the cytoplasm. The catalysed reaction is N(6)-carboxybiotinyl-L-lysyl-[protein] + acetyl-CoA = N(6)-biotinyl-L-lysyl-[protein] + malonyl-CoA. It functions in the pathway lipid metabolism; malonyl-CoA biosynthesis; malonyl-CoA from acetyl-CoA: step 1/1. Its function is as follows. Component of the acetyl coenzyme A carboxylase (ACC) complex. First, biotin carboxylase catalyzes the carboxylation of biotin on its carrier protein (BCCP) and then the CO(2) group is transferred by the carboxyltransferase to acetyl-CoA to form malonyl-CoA. Functionally, confers resistance to the endogenous polyketide antibiotic thailandamide. Can replace the endogenous gene in S.typhimurium, conferring slow growth and resistance to thailandamide. Can also replace the endogenous gene in E.coli, conferring resistance to thailandamide. The protein is Acetyl-coenzyme A carboxylase carboxyl transferase subunit alpha 2 of Burkholderia thailandensis (strain ATCC 700388 / DSM 13276 / CCUG 48851 / CIP 106301 / E264).